We begin with the raw amino-acid sequence, 474 residues long: tRNA (guanine(37)-N(1))-methyltransferase (474 aa).

Residues His-234, 274-275 (DL), 303-304 (DA), and Asn-345 each bind S-adenosyl-L-methionine. The segment covering 452–464 (EPEAQCESEEAEE) has biased composition (acidic residues). The segment at 452-474 (EPEAQCESEEAEEPSSKRIKVDT) is disordered. Basic and acidic residues predominate over residues 465 to 474 (PSSKRIKVDT).

Belongs to the class I-like SAM-binding methyltransferase superfamily. TRM5/TYW2 family. Monomer.

Its subcellular location is the mitochondrion matrix. The protein localises to the nucleus. It is found in the cytoplasm. The enzyme catalyses guanosine(37) in tRNA + S-adenosyl-L-methionine = N(1)-methylguanosine(37) in tRNA + S-adenosyl-L-homocysteine + H(+). Its function is as follows. Specifically methylates the N1 position of guanosine-37 in various cytoplasmic and mitochondrial tRNAs. Methylation is not dependent on the nature of the nucleoside 5' of the target nucleoside. This is the first step in the biosynthesis of wybutosine (yW), a modified base adjacent to the anticodon of tRNAs and required for accurate decoding. The protein is tRNA (guanine(37)-N(1))-methyltransferase of Caenorhabditis elegans.